The chain runs to 364 residues: MEKAKLMKLGNGMEIPSVQELAKLTLAEIPSRYVCANENLLLPMGASVINDHETIPVIDIENLLSPEPIIGKLELDRLHFACKEWGFFQVVNHGVDASLVDSVKSEIQGFFNLSMDEKTKYEQEDGDVEGFGQGFIESEDQTLDWADIFMMFTLPLHLRKPHLFSKLPVPLRETIESYSSEMKKLSMVLFNKMEKALQVQAAEIKGMSEVFIDGTQAMRMNYYPPCPQPNLAIGLTSHSDFGGLTILLQINEVEGLQIKREGTWIAVKPLPNAFVVNVGDILEIMTNGIYHSVDHRAVVNSTNERLSIATFHDPSLESVIGPISSLITPETPALFKSGSTYGDLVEECKTRKLDGKSFLDSMRI.

In terms of domain architecture, Fe2OG dioxygenase spans 214 to 314; the sequence is GTQAMRMNYY…RLSIATFHDP (101 aa). Tyr223 is a 2-oxoglutarate binding site. 3 residues coordinate Fe cation: His238, Asp240, and His295. 2-oxoglutarate is bound by residues Arg305 and Ser307.

Belongs to the iron/ascorbate-dependent oxidoreductase family. The cofactor is L-ascorbate. Fe cation is required as a cofactor. As to expression, mainly expressed in stems and leaves and, to a lower extent, in capsules and roots.

It catalyses the reaction thebaine + 2-oxoglutarate + O2 = neopinone + formaldehyde + succinate + CO2. The enzyme catalyses oripavine + 2-oxoglutarate + O2 = neomorphinone + formaldehyde + succinate + CO2. It carries out the reaction (S)-canadine + S-adenosyl-L-methionine = (S)-cis-N-methylcanadine + S-adenosyl-L-homocysteine. The catalysed reaction is thebaine + 2-oxoglutarate + O2 = 6-O-demethylthebaine + formaldehyde + succinate + CO2 + H(+). It functions in the pathway alkaloid biosynthesis; morphine biosynthesis. Its activity is regulated as follows. Moderate substrate inhibition. Not inhibited in vitro by acylcyclohexanediones. Its function is as follows. Non-heme dioxygenase involved in biosynthesis of morphinan-type benzylisoquinoline and opiate alkaloids natural products. Mediates the conversion of thebaine to neopinone. Also catalyzes, with lower efficiency, the 6-O-demethylation of oripavine to neomorphinone, which is converted spontaneously to morphinone. Supports dealkylation reactions such as O,O-demethylenation in the metabolism of protopine, benzo[c]phenanthridine, and rhoeadine alkaloids; cleaves a methylenedioxy bridge leaving two hydroxyl groups. Catalyzes the O-demethylation of methylenedioxy bridges on protopine alkaloids such as allocryptopine. No activity with (S)-reticuline, salutaridine, papaverine, (S)-corytuberine, (S)-scoulerine, pavine, noscapine or codeine. This is Thebaine 6-O-demethylase from Papaver somniferum (Opium poppy).